The primary structure comprises 2443 residues: Spatacsin (2443 aa).

S1955 is modified (phosphoserine).

As to quaternary structure, interacts with AP5Z1, AP5B1, AP5S1 and ZFYVE26. As to expression, expressed in all structures of brain, with a high expression in cerebellum. Expressed in cortical projection neurons.

The protein resides in the cytoplasm. It localises to the cytosol. It is found in the nucleus. The protein localises to the cell projection. Its subcellular location is the axon. The protein resides in the dendrite. Its function is as follows. May play a role in neurite plasticity by maintaining cytoskeleton stability and regulating synaptic vesicle transport. In Homo sapiens (Human), this protein is Spatacsin (SPG11).